The sequence spans 232 residues: Ribonuclease 3 (232 aa).

Residues 5–134 (QTVLKNHFAI…FLGALLLDKD (130 aa)) form the RNase III domain. Glutamate 47 is a binding site for Mg(2+). Aspartate 51 is an active-site residue. The Mg(2+) site is built by aspartate 120 and glutamate 123. The active site involves glutamate 123. Residues 160–229 (DYKTHLQELL…AKNAVEKGLD (70 aa)) form the DRBM domain.

It belongs to the ribonuclease III family. Homodimer. Requires Mg(2+) as cofactor.

Its subcellular location is the cytoplasm. It carries out the reaction Endonucleolytic cleavage to 5'-phosphomonoester.. Functionally, digests double-stranded RNA. Involved in the processing of primary rRNA transcript to yield the immediate precursors to the large and small rRNAs (23S and 16S). Processes some mRNAs, and tRNAs when they are encoded in the rRNA operon. Processes pre-crRNA and tracrRNA of type II CRISPR loci if present in the organism. This Streptococcus pneumoniae (strain P1031) protein is Ribonuclease 3.